The following is a 240-amino-acid chain: uncharacterized protein (240 aa).

Positions 216 to 240 (MKQSKNKPRIRQAVGATRQCRKPQA) are disordered.

This is an uncharacterized protein from Escherichia coli (strain K12).